A 485-amino-acid polypeptide reads, in one-letter code: Glutamate--tRNA ligase (485 aa).

Residues 11–21 (PSPTGHLHIGN) carry the 'HIGH' region motif. Residues 252-256 (KLSKR) carry the 'KMSKS' region motif. An ATP-binding site is contributed by K255.

Belongs to the class-I aminoacyl-tRNA synthetase family. Glutamate--tRNA ligase type 1 subfamily. As to quaternary structure, monomer.

The protein localises to the cytoplasm. It catalyses the reaction tRNA(Glu) + L-glutamate + ATP = L-glutamyl-tRNA(Glu) + AMP + diphosphate. Its function is as follows. Catalyzes the attachment of glutamate to tRNA(Glu) in a two-step reaction: glutamate is first activated by ATP to form Glu-AMP and then transferred to the acceptor end of tRNA(Glu). The protein is Glutamate--tRNA ligase of Bacillus cereus (strain ATCC 14579 / DSM 31 / CCUG 7414 / JCM 2152 / NBRC 15305 / NCIMB 9373 / NCTC 2599 / NRRL B-3711).